Here is a 552-residue protein sequence, read N- to C-terminus: Non-structural protein NS1 (552 aa).

The protein belongs to the orbivirus non-structural protein NS1 family.

The chain is Non-structural protein NS1 (Segment-5) from Bluetongue virus 10 (isolate USA) (BTV 10).